We begin with the raw amino-acid sequence, 707 residues long: E3 ubiquitin-protein ligase Praja-2 (707 aa).

Over residues 1-10 the composition is skewed to basic and acidic residues; it reads MSQYTEKEPS. 3 disordered regions span residues 1–32, 72–120, and 250–314; these read MSQYTEKEPSVMDQESSKAAWPKPAGGYQTIT, PKEN…PSIA, and QNGQ…VRPK. Ser-2 is modified (N-acetylserine). Composition is skewed to polar residues over residues 74 to 83 and 109 to 119; these read ENTSGSSSLD and LNQSTESSPSI. Residues 257 to 276 show a composition bias toward basic and acidic residues; the sequence is RSSEDGVVRKRRQDDTDQGR. The segment covering 293-308 has biased composition (polar residues); it reads EQNTSDRANHHGSSPE. 2 positions are modified to phosphoserine: Ser-306 and Ser-320. Ser-339 is subject to Phosphoserine; by PKA. Disordered regions lie at residues 379–405 and 424–493; these read RVTQRETERNRVTSENGATASGRQESR and EDSS…QTSL. Over residues 381-390 the composition is skewed to basic and acidic residues; it reads TQRETERNRV. Residue Thr-385 is modified to Phosphothreonine; by PKA. Residues 391–401 show a composition bias toward polar residues; that stretch reads TSENGATASGR. A Phosphoserine modification is found at Ser-430. Over residues 465–481 the composition is skewed to acidic residues; the sequence is NDPELQSDSSGPEEENQ. A compositionally biased stretch (polar residues) spans 482-491; the sequence is ELSLQEGEQT. The interval 530-707 is interaction with PRKAR1A, PRKAR2A and PRKAR2B; it reads DGNNNLEDDS…PANDNAEEAP (178 aa). Residues 549–569 are mediates interaction with TBC1D31; it reads WSLFDGFADGLGVAEAISYVD. Residues 633–674 form an RING-type; atypical zinc finger; the sequence is CPICCSEYIKDDIATELPCHHFFHKPCVSIWLQKSGTCPVCR. Over residues 685 to 701 the composition is skewed to low complexity; that stretch reads SAAASSDPDPDASPAND. The segment at 685–707 is disordered; that stretch reads SAAASSDPDPDASPANDNAEEAP.

In terms of assembly, binds ubiquitin-conjugating enzymes (E2s). In vitro, interacts with the ubiquitin-conjugating enzyme, UBE2D2. The phosphorylated form interacts with PRKAR1A, PRKAR2A and PRKAR2B. Binds the catalytic subunits of cAMP-dependent protein kinase. Interacts with MFHAS1. Interacts with TBC1D31; the interaction is direct and recruits PJA2 to centrosomes.

It localises to the cytoplasm. The protein localises to the cell membrane. The protein resides in the endoplasmic reticulum membrane. Its subcellular location is the golgi apparatus membrane. It is found in the synapse. It localises to the postsynaptic density. The protein localises to the cytoskeleton. The protein resides in the microtubule organizing center. Its subcellular location is the centrosome. The catalysed reaction is S-ubiquitinyl-[E2 ubiquitin-conjugating enzyme]-L-cysteine + [acceptor protein]-L-lysine = [E2 ubiquitin-conjugating enzyme]-L-cysteine + N(6)-ubiquitinyl-[acceptor protein]-L-lysine.. The protein operates within protein modification; protein ubiquitination. In terms of biological role, has E2-dependent E3 ubiquitin-protein ligase activity. Responsible for ubiquitination of cAMP-dependent protein kinase type I and type II-alpha/beta regulatory subunits and for targeting them for proteasomal degradation. Essential for PKA-mediated long-term memory processes. Through the ubiquitination of MFHAS1, positively regulates the TLR2 signaling pathway that leads to the activation of the downstream p38 and JNK MAP kinases and promotes the polarization of macrophages toward the pro-inflammatory M1 phenotype. Plays a role in ciliogenesis by ubiquitinating OFD1. The protein is E3 ubiquitin-protein ligase Praja-2 (Pja2) of Mus musculus (Mouse).